A 143-amino-acid polypeptide reads, in one-letter code: MSRSGVAVSDEALKAFNDLKLGKKFKSIIYKLNDAKTEIVVDSTSTEDAYDAFVEDLPENDCRYAVYDFEYEVGQGDGKRNKIVFYQWSPDTASVRAKMVYASSKDALRRALNGIGTEIQGTDFSEVAYESVLEKISRTTGLH.

The 133-residue stretch at 5-137 folds into the ADF-H domain; that stretch reads GVAVSDEALK…AYESVLEKIS (133 aa).

This sequence belongs to the actin-binding proteins ADF family.

Its subcellular location is the cytoplasm. The protein resides in the cytoskeleton. It localises to the nucleus matrix. In terms of biological role, controls reversibly actin polymerization and depolymerization in a pH-sensitive manner. It has the ability to bind G- and F-actin in a 1:1 ratio of cofilin to actin. Binding to F-actin is regulated by tropomyosin. It is the major component of intranuclear and cytoplasmic actin rods. Required for accumulation of actin at the cell division site via depolymerizing actin at the cell ends. In association with myosin II has a role in the assembly of the contractile ring via severing actin filaments. Involved in the maintenance of the contractile ring once formed. In association with profilin and capping protein, has a role in the mitotic reorganization of the actin cytoskeleton. In Ogataea parapolymorpha (strain ATCC 26012 / BCRC 20466 / JCM 22074 / NRRL Y-7560 / DL-1) (Yeast), this protein is Cofilin (COF1).